The primary structure comprises 126 residues: Protein ApaG (126 aa).

An ApaG domain is found at 2–126 (SQVESPIKIK…FRLAVPGIFQ (125 aa)).

This Shewanella frigidimarina (strain NCIMB 400) protein is Protein ApaG.